The primary structure comprises 704 residues: Elongation factor G (704 aa).

The tr-type G domain maps to 8–291; sequence DKVRNIGIMA…AVVDYLASPL (284 aa). Residues 17–24, 90–94, and 144–147 each bind GTP; these read AHIDAGKT, DTPGH, and NKMD.

It belongs to the TRAFAC class translation factor GTPase superfamily. Classic translation factor GTPase family. EF-G/EF-2 subfamily.

The protein resides in the cytoplasm. Functionally, catalyzes the GTP-dependent ribosomal translocation step during translation elongation. During this step, the ribosome changes from the pre-translocational (PRE) to the post-translocational (POST) state as the newly formed A-site-bound peptidyl-tRNA and P-site-bound deacylated tRNA move to the P and E sites, respectively. Catalyzes the coordinated movement of the two tRNA molecules, the mRNA and conformational changes in the ribosome. The chain is Elongation factor G from Chlorobium luteolum (strain DSM 273 / BCRC 81028 / 2530) (Pelodictyon luteolum).